Here is a 91-residue protein sequence, read N- to C-terminus: Small ribosomal subunit protein bS16 (91 aa).

This sequence belongs to the bacterial ribosomal protein bS16 family.

In Levilactobacillus brevis (strain ATCC 367 / BCRC 12310 / CIP 105137 / JCM 1170 / LMG 11437 / NCIMB 947 / NCTC 947) (Lactobacillus brevis), this protein is Small ribosomal subunit protein bS16.